Reading from the N-terminus, the 1384-residue chain is DNA-directed RNA polymerase subunit beta (1384 aa).

The protein belongs to the RNA polymerase beta chain family. In terms of assembly, the RNAP catalytic core consists of 2 alpha, 1 beta, 1 beta' and 1 omega subunit. When a sigma factor is associated with the core the holoenzyme is formed, which can initiate transcription.

The catalysed reaction is RNA(n) + a ribonucleoside 5'-triphosphate = RNA(n+1) + diphosphate. Functionally, DNA-dependent RNA polymerase catalyzes the transcription of DNA into RNA using the four ribonucleoside triphosphates as substrates. This is DNA-directed RNA polymerase subunit beta from Xylella fastidiosa (strain M12).